Reading from the N-terminus, the 92-residue chain is Small ribosomal subunit protein bS20 (92 aa).

Positions 1 to 23 are disordered; the sequence is MANSPSAKKRAIQAEKRRSHNAS.

Belongs to the bacterial ribosomal protein bS20 family.

In terms of biological role, binds directly to 16S ribosomal RNA. In Stutzerimonas stutzeri (strain A1501) (Pseudomonas stutzeri), this protein is Small ribosomal subunit protein bS20.